The chain runs to 195 residues: MEAFTIHTGRAVPLRRSDVDTDQIIPSEWLKRIERTGFGAGLFAQWRADDGFVLNEPAYAAASILLAGSDFGTGSSREHAVWALQDYGFRAVLSPRFADIFRGNALGNGLLPVQLSAETVEALTSAVEADPTIEITVDLVAREVRGAGLVATFDLDDFTRWRLMEGLDDVGLTLRHEDMITSFEAGRPAWSPTTA.

This sequence belongs to the LeuD family. LeuD type 1 subfamily. As to quaternary structure, heterodimer of LeuC and LeuD.

The enzyme catalyses (2R,3S)-3-isopropylmalate = (2S)-2-isopropylmalate. It functions in the pathway amino-acid biosynthesis; L-leucine biosynthesis; L-leucine from 3-methyl-2-oxobutanoate: step 2/4. Its function is as follows. Catalyzes the isomerization between 2-isopropylmalate and 3-isopropylmalate, via the formation of 2-isopropylmaleate. The polypeptide is 3-isopropylmalate dehydratase small subunit (Frankia casuarinae (strain DSM 45818 / CECT 9043 / HFP020203 / CcI3)).